The following is a 266-amino-acid chain: MVKVTFNSALAQKEAKKDEPKSSEEALIAPPDAVAVDCKDPDDVVPVGQRRAWCWCMCFGLAFMLAGVILGGAYLYKYFALQPDDVYYCGLKYIKDDVILSEPSADAPAARYQTIEENIKIFEEDAVEFISVPVPEFADSDPANIVHDFNKKLTAYLDLNLDKCYVIPLNTSIVMPPRNLLELLINIKAGTYLPQSYLIHEHMVITDRIENVDHLGFFIYRLCHDKETYKLQRRETIRGIQKREASNCFTIRHFENKFAVETLICS.

The Cytoplasmic segment spans residues 1-54 (MVKVTFNSALAQKEAKKDEPKSSEEALIAPPDAVAVDCKDPDDVVPVGQRRAWC). The chain crosses the membrane as a helical; Signal-anchor for type II membrane protein span at residues 55-75 (WCMCFGLAFMLAGVILGGAYL). The Lumenal segment spans residues 76–266 (YKYFALQPDD…KFAVETLICS (191 aa)). The necessary for interaction with APP and inhibitor effects on APP processing stretch occupies residues 102 to 134 (EPSADAPAARYQTIEENIKIFEEDAVEFISVPV). Residues 137 to 231 (FADSDPANIV…LCHDKETYKL (95 aa)) enclose the BRICHOS domain. 2 cysteine pairs are disulfide-bonded: Cys164/Cys223 and Cys248/Cys265. Asn170 is a glycosylation site (N-linked (GlcNAc...) asparagine).

It belongs to the ITM2 family. As to quaternary structure, homodimer; disulfide-linked. Interacts with SPPL2A and SPPL2B. Interacts with APP. Mature BRI2 (mBRI2) interacts with the APP amyloid-beta A4 protein; the interaction occurs at the cell surface and in the endocytic compartments and enable alpha- and beta-secretase-induced APP cleavage inhibition. Mature BRI2 (mBRI2) interacts with the APP C99; the interaction occurs in the endocytic compartments and enable gamma-secretase-induced C99 cleavage inhibition. May form heterodimers with Bri23 peptide and APP amyloid-beta protein 40. Interacts with ADAM7 in sperm; the interaction increases following capacitation. In terms of processing, the ectodomain C-terminal part of the imBRI2 is processed by furin producing a secreted Bri23 peptide and a mature BRI2, membrane form (mBRI2). The remaining part of the ectodomain of mBRI2 containing the BRICHOS domain is cleaved by ADAM10 and is secreted (BRI2C, soluble form). The membrane-bound N-terminal fragment (BRI2C, membrane form) is further proteolytically processed by SPPL2A and SPPL2B through regulated intramembrane proteolysis producing a secreted C-peptide and a BRI2 intracellular domain (BRI2 ICD) released in the cytosol. Shedding by ADAM10 facilitates intramembrane cleavage but is not absolutely required for BRI2 ICD generation. Post-translationally, glycosylation at Asn-170 is important for cell surface localization, but doesn't affect furin- and ADAM10-induced proteolytic processing.

The protein localises to the golgi apparatus membrane. The protein resides in the cell membrane. Its subcellular location is the endosome membrane. It is found in the secreted. Plays a regulatory role in the processing of the amyloid-beta A4 precursor protein (APP) and acts as an inhibitor of the amyloid-beta peptide aggregation and fibrils deposition. Plays a role in the induction of neurite outgrowth. Functions as a protease inhibitor by blocking access of secretases to APP cleavage sites. Its function is as follows. Mature BRI2 (mBRI2) functions as a modulator of the amyloid-beta A4 precursor protein (APP) processing leading to a strong reduction in the secretion of secretase-processed amyloid-beta protein 40 and amyloid-beta protein 42. In terms of biological role, bri23 peptide prevents aggregation of APP amyloid-beta protein 42 into toxic oligomers. This is Integral membrane protein 2B (Itm2b) from Rattus norvegicus (Rat).